The primary structure comprises 161 residues: Nucleotide-binding protein Aave_1854 (161 aa).

It belongs to the YajQ family.

Nucleotide-binding protein. The chain is Nucleotide-binding protein Aave_1854 from Paracidovorax citrulli (strain AAC00-1) (Acidovorax citrulli).